A 927-amino-acid polypeptide reads, in one-letter code: E3 ubiquitin-protein ligase HOS1 (927 aa).

An RING-type; degenerate zinc finger spans residues 53 to 93; the sequence is CRATRDLASCGRFVNYVLNPCGHASLCTECCQRCDVCPICR. Disordered stretches follow at residues 678 to 699, 782 to 806, and 832 to 927; these read SGQFSEMEDASEGAKKSDLPDA, FKDLNRARGNSQLQGKRTEESSPEV, and VKSS…FAAR. Over residues 797 to 806 the composition is skewed to basic and acidic residues; that stretch reads KRTEESSPEV. Polar residues-rich tracts occupy residues 832–851 and 878–892; these read VKSSSNHLNGSSQKPESTFF and NNNNVLATESRNNSG. A compositionally biased stretch (basic residues) spans 917 to 927; that stretch reads KGRRRRRFAAR.

In terms of assembly, interacts with SCRM/ICE1, FLK and MSI4/FVE. Ubiquitously expressed with higher levels in leaf vasculature, roots and root tips.

The protein resides in the nucleus. It is found in the cytoplasm. It carries out the reaction S-ubiquitinyl-[E2 ubiquitin-conjugating enzyme]-L-cysteine + [acceptor protein]-L-lysine = [E2 ubiquitin-conjugating enzyme]-L-cysteine + N(6)-ubiquitinyl-[acceptor protein]-L-lysine.. It participates in protein modification; protein ubiquitination. In terms of biological role, E3 ubiquitin-protein ligase that mediates ubiquitination and subsequent proteasomal degradation of the transcription factor ICE1. Acts as a negative regulator of cold signaling pathways. Probably involved in recruiting the NUP107-160 subcomplex of the nuclear pore complex to chromatin. Controls flowering time in response to ambient temperatures (16 and 23 degrees Celsius) and intermittent cold, probably via the regulation of FT and TSF levels. The polypeptide is E3 ubiquitin-protein ligase HOS1 (HOS1) (Arabidopsis thaliana (Mouse-ear cress)).